A 330-amino-acid polypeptide reads, in one-letter code: Ribose operon repressor (330 aa).

The 55-residue stretch at Ala2–Leu56 folds into the HTH lacI-type domain. Residues Met4–Asn23 constitute a DNA-binding region (H-T-H motif).

In terms of biological role, transcriptional repressor for the ribose rbsDACBK operon. RbsR binds to a region of perfect dyad symmetry spanning the rbs operon transcriptional start site. The affinity for the rbs operator is reduced by addition of ribose, consistent with ribose being the inducer of the operon. The chain is Ribose operon repressor (rbsR) from Escherichia coli O6:H1 (strain CFT073 / ATCC 700928 / UPEC).